Here is a 362-residue protein sequence, read N- to C-terminus: 3-isopropylmalate dehydrogenase (362 aa).

Positions 97, 107, 135, and 225 each coordinate substrate. Mg(2+) contacts are provided by aspartate 225, aspartate 249, and aspartate 253. Residue 283–295 (GSAPDIAHKNLAN) coordinates NAD(+).

The protein belongs to the isocitrate and isopropylmalate dehydrogenases family. LeuB type 1 subfamily. Homodimer. Mg(2+) serves as cofactor. It depends on Mn(2+) as a cofactor.

The protein localises to the cytoplasm. It catalyses the reaction (2R,3S)-3-isopropylmalate + NAD(+) = 4-methyl-2-oxopentanoate + CO2 + NADH. It participates in amino-acid biosynthesis; L-leucine biosynthesis; L-leucine from 3-methyl-2-oxobutanoate: step 3/4. Functionally, catalyzes the oxidation of 3-carboxy-2-hydroxy-4-methylpentanoate (3-isopropylmalate) to 3-carboxy-4-methyl-2-oxopentanoate. The product decarboxylates to 4-methyl-2 oxopentanoate. The polypeptide is 3-isopropylmalate dehydrogenase (Prochlorococcus marinus (strain SARG / CCMP1375 / SS120)).